A 142-amino-acid polypeptide reads, in one-letter code: Alpha-lactalbumin (142 aa).

An N-terminal signal peptide occupies residues 1-19; sequence MMSFVSLLLVGILFHATQA. The 123-residue stretch at 20 to 142 folds into the C-type lysozyme domain; sequence EQLTKCEVFQ…KLDQWLCEKL (123 aa). Intrachain disulfides connect Cys-25–Cys-139, Cys-47–Cys-130, Cys-80–Cys-96, and Cys-92–Cys-110. N-linked (GlcNAc...) asparagine glycosylation is found at Asn-64 and Asn-93. 5 residues coordinate Ca(2+): Lys-98, Asp-101, Asp-103, Asp-106, and Asp-107.

The protein belongs to the glycosyl hydrolase 22 family. In terms of assembly, lactose synthase (LS) is a heterodimer of a catalytic component, beta1,4-galactosyltransferase (beta4Gal-T1) and a regulatory component, alpha-lactalbumin (LA). Mammary gland specific. Secreted in milk.

The protein resides in the secreted. Regulatory subunit of lactose synthase, changes the substrate specificity of galactosyltransferase in the mammary gland making glucose a good acceptor substrate for this enzyme. This enables LS to synthesize lactose, the major carbohydrate component of milk. In other tissues, galactosyltransferase transfers galactose onto the N-acetylglucosamine of the oligosaccharide chains in glycoproteins. The protein is Alpha-lactalbumin (LALBA) of Capra hircus (Goat).